The sequence spans 309 residues: Ribonuclease Z (309 aa).

H63, H65, D67, H68, H141, D212, and H270 together coordinate Zn(2+). D67 (proton acceptor) is an active-site residue.

It belongs to the RNase Z family. Homodimer. The cofactor is Zn(2+).

The catalysed reaction is Endonucleolytic cleavage of RNA, removing extra 3' nucleotides from tRNA precursor, generating 3' termini of tRNAs. A 3'-hydroxy group is left at the tRNA terminus and a 5'-phosphoryl group is left at the trailer molecule.. Its function is as follows. Zinc phosphodiesterase, which displays some tRNA 3'-processing endonuclease activity. Probably involved in tRNA maturation, by removing a 3'-trailer from precursor tRNA. In Lactobacillus johnsonii (strain CNCM I-12250 / La1 / NCC 533), this protein is Ribonuclease Z.